Reading from the N-terminus, the 262-residue chain is Transmembrane protein 270 (262 aa).

The next 5 helical transmembrane spans lie at Leu6–Ile26, Ala30–Leu50, Pro67–Leu87, Leu92–Gly112, and Leu127–Trp147. Residues Gln226–Glu262 are disordered. Residues Thr240–Glu262 are compositionally biased toward pro residues.

The protein resides in the membrane. The polypeptide is Transmembrane protein 270 (Bos taurus (Bovine)).